Consider the following 497-residue polypeptide: Glutamate--tRNA ligase (497 aa).

The 'HIGH' region signature appears at 12 to 22 (PSPTGHLHIGN). A 'KMSKS' region motif is present at residues 259–263 (KLSKR). Lysine 262 serves as a coordination point for ATP.

Belongs to the class-I aminoacyl-tRNA synthetase family. Glutamate--tRNA ligase type 1 subfamily. Monomer.

The protein localises to the cytoplasm. It carries out the reaction tRNA(Glu) + L-glutamate + ATP = L-glutamyl-tRNA(Glu) + AMP + diphosphate. Its function is as follows. Catalyzes the attachment of glutamate to tRNA(Glu) in a two-step reaction: glutamate is first activated by ATP to form Glu-AMP and then transferred to the acceptor end of tRNA(Glu). In Lacticaseibacillus casei (strain BL23) (Lactobacillus casei), this protein is Glutamate--tRNA ligase.